Reading from the N-terminus, the 295-residue chain is Bifunctional protein FolD (295 aa).

NADP(+)-binding positions include 166 to 168, Ser-191, and Ile-232; that span reads GRS.

This sequence belongs to the tetrahydrofolate dehydrogenase/cyclohydrolase family. As to quaternary structure, homodimer.

It carries out the reaction (6R)-5,10-methylene-5,6,7,8-tetrahydrofolate + NADP(+) = (6R)-5,10-methenyltetrahydrofolate + NADPH. The catalysed reaction is (6R)-5,10-methenyltetrahydrofolate + H2O = (6R)-10-formyltetrahydrofolate + H(+). It functions in the pathway one-carbon metabolism; tetrahydrofolate interconversion. Its function is as follows. Catalyzes the oxidation of 5,10-methylenetetrahydrofolate to 5,10-methenyltetrahydrofolate and then the hydrolysis of 5,10-methenyltetrahydrofolate to 10-formyltetrahydrofolate. The protein is Bifunctional protein FolD of Rhodopseudomonas palustris (strain BisA53).